Reading from the N-terminus, the 143-residue chain is Large ribosomal subunit protein uL11 (143 aa).

This sequence belongs to the universal ribosomal protein uL11 family. Part of the ribosomal stalk of the 50S ribosomal subunit. Interacts with L10 and the large rRNA to form the base of the stalk. L10 forms an elongated spine to which L12 dimers bind in a sequential fashion forming a multimeric L10(L12)X complex. In terms of processing, one or more lysine residues are methylated.

Forms part of the ribosomal stalk which helps the ribosome interact with GTP-bound translation factors. The chain is Large ribosomal subunit protein uL11 from Cupriavidus pinatubonensis (strain JMP 134 / LMG 1197) (Cupriavidus necator (strain JMP 134)).